Consider the following 939-residue polypeptide: MSVLSKIMRAGEGKILRKLHRIADQVNSIEEDFVDLSDAELRALTDEYKQRYADGESLDDLLPEAFATVREAAKRVLGQRHYDVQMMGGAALHLGYVAEMKTGEGKTLVGTLPAYLNALSGDGVHLITVNDYLAERDSEMMGRVHKFLGLSVGCILANMTPAQRREQYGCDITYGTNNEFGFDYLRDNMAWSQDELVQRGHNFAVVDEVDSILVDEARTPLIISGPADQATKWYGDFAKLVTRLKKGEAGNTLKGIEETGDYEVDEKKRTVAIHESGVAKVEDWLGIDNLYESVNTPLVGYLNNAIKAKELFKKDKDYVVIDGEVMIVDEHTGRILAGRRYNEGMHQAIEAKEGVDIKDENQTLATITLQNFFRLYNKLSGMTGTAMTEAAEFHQIYKLGVVPIPTNKPMVRKDQSDLIYRTEVAKFDAVVDDIAEKHEKGQPILVGTTSVEKSEYLSQQLSKRGIQHEVLNAKQHDREATIVAQAGRKGAVTVATNMAGRGTDIKLGGNPDDLAEAELRQRGLDPEEHIEEWAAALPAALERAEKAVKAEFEEVKELGGLYVLGTERHESRRIDNQLRGRSGRQGDPGESRFYLSLGDDLMRLFKAQMVERVMSMANVPDDVPIENKMVTRAIASAQSQVETQNFETRKNVLKYDEVLNRQREVIYGERRRVLEGEDLQEQIHHFMDDTIDAYIEAETAEGFAEEWDLDRLWGAFKQLYPVKVTVDELEEAAGDRAGLTAEFISESIKDDIHEQYEQRETQLGSEIMRELERRVVLSVLDRKWREHLYEMDYLQEGIGLRAMAQKDPLVEYQREGFDMFTAMMDGIKEESVGYLFNLEVQVEQQVEEVPVEDEKPSLEKEDAVPAQAGARPEIRAKGLEAPQRPDRLHFSAPTVDGEGGIIEGDFSSDDDEEPVRSEADGLTRAERRKQSKGGRRRKK.

Residues glutamine 85, 103–107 (GEGKT), and aspartate 504 each bind ATP. Residues 848-939 (EVPVEDEKPS…QSKGGRRRKK (92 aa)) form a disordered region. Composition is skewed to basic and acidic residues over residues 852 to 863 (EDEKPSLEKEDA), 872 to 889 (PEIR…DRLH), and 914 to 925 (PVRSEADGLTRA). Positions 926–939 (ERRKQSKGGRRRKK) are enriched in basic residues.

It belongs to the SecA family. As to quaternary structure, monomer and homodimer. Part of the essential Sec protein translocation apparatus which comprises SecA, SecYEG and auxiliary proteins SecDF. Other proteins may also be involved.

The protein localises to the cell membrane. It localises to the cytoplasm. It carries out the reaction ATP + H2O + cellular proteinSide 1 = ADP + phosphate + cellular proteinSide 2.. Its function is as follows. Part of the Sec protein translocase complex. Interacts with the SecYEG preprotein conducting channel. Has a central role in coupling the hydrolysis of ATP to the transfer of proteins into and across the cell membrane, serving as an ATP-driven molecular motor driving the stepwise translocation of polypeptide chains across the membrane. This is Protein translocase subunit SecA 1 from Streptomyces avermitilis (strain ATCC 31267 / DSM 46492 / JCM 5070 / NBRC 14893 / NCIMB 12804 / NRRL 8165 / MA-4680).